A 209-amino-acid polypeptide reads, in one-letter code: Thiamine-phosphate synthase (209 aa).

Residues Gln-36–Lys-40 and Asn-68 contribute to the 4-amino-2-methyl-5-(diphosphooxymethyl)pyrimidine site. The Mg(2+) site is built by Asp-69 and Asp-87. 4-amino-2-methyl-5-(diphosphooxymethyl)pyrimidine is bound at residue Thr-106. Ser-133–Thr-135 serves as a coordination point for 2-[(2R,5Z)-2-carboxy-4-methylthiazol-5(2H)-ylidene]ethyl phosphate. Lys-136 contributes to the 4-amino-2-methyl-5-(diphosphooxymethyl)pyrimidine binding site. Residue Gly-163 coordinates 2-[(2R,5Z)-2-carboxy-4-methylthiazol-5(2H)-ylidene]ethyl phosphate.

Belongs to the thiamine-phosphate synthase family. Mg(2+) serves as cofactor.

It catalyses the reaction 2-[(2R,5Z)-2-carboxy-4-methylthiazol-5(2H)-ylidene]ethyl phosphate + 4-amino-2-methyl-5-(diphosphooxymethyl)pyrimidine + 2 H(+) = thiamine phosphate + CO2 + diphosphate. The catalysed reaction is 2-(2-carboxy-4-methylthiazol-5-yl)ethyl phosphate + 4-amino-2-methyl-5-(diphosphooxymethyl)pyrimidine + 2 H(+) = thiamine phosphate + CO2 + diphosphate. It carries out the reaction 4-methyl-5-(2-phosphooxyethyl)-thiazole + 4-amino-2-methyl-5-(diphosphooxymethyl)pyrimidine + H(+) = thiamine phosphate + diphosphate. It participates in cofactor biosynthesis; thiamine diphosphate biosynthesis; thiamine phosphate from 4-amino-2-methyl-5-diphosphomethylpyrimidine and 4-methyl-5-(2-phosphoethyl)-thiazole: step 1/1. In terms of biological role, condenses 4-methyl-5-(beta-hydroxyethyl)thiazole monophosphate (THZ-P) and 2-methyl-4-amino-5-hydroxymethyl pyrimidine pyrophosphate (HMP-PP) to form thiamine monophosphate (TMP). This Pseudomonas paraeruginosa (strain DSM 24068 / PA7) (Pseudomonas aeruginosa (strain PA7)) protein is Thiamine-phosphate synthase.